The chain runs to 86 residues: Large ribosomal subunit protein bL31B (86 aa).

This sequence belongs to the bacterial ribosomal protein bL31 family. Type B subfamily. In terms of assembly, part of the 50S ribosomal subunit.

The sequence is that of Large ribosomal subunit protein bL31B from Chloroherpeton thalassium (strain ATCC 35110 / GB-78).